The following is an 85-amino-acid chain: NADH-ubiquinone oxidoreductase chain 4L (85 aa).

2 helical membrane-spanning segments follow: residues 21-41 and 51-71; these read LLVT…LLVY and FIFL…LVSL.

This sequence belongs to the complex I subunit 4L family.

The protein localises to the mitochondrion membrane. The enzyme catalyses a ubiquinone + NADH + 5 H(+)(in) = a ubiquinol + NAD(+) + 4 H(+)(out). Its function is as follows. Core subunit of the mitochondrial membrane respiratory chain NADH dehydrogenase (Complex I) that is believed to belong to the minimal assembly required for catalysis. Complex I functions in the transfer of electrons from NADH to the respiratory chain. The immediate electron acceptor for the enzyme is believed to be ubiquinone. The polypeptide is NADH-ubiquinone oxidoreductase chain 4L (ND4L) (Artemia franciscana (Brine shrimp)).